A 182-amino-acid chain; its full sequence is uncharacterized protein (182 aa).

The protein resides in the plastid. It is found in the cyanelle. This is an uncharacterized protein from Cyanophora paradoxa.